The following is a 426-amino-acid chain: Glucan 1,3-beta-glucosidase (426 aa).

The N-terminal stretch at 1–20 is a signal peptide; it reads MLYPRALLPAAVALASLVLA. E208 serves as the catalytic Proton donor. Intrachain disulfides connect C290–C416 and C315–C343. Residue E307 is the Nucleophile of the active site.

It belongs to the glycosyl hydrolase 5 (cellulase A) family.

Its subcellular location is the secreted. The catalysed reaction is Successive hydrolysis of beta-D-glucose units from the non-reducing ends of (1-&gt;3)-beta-D-glucans, releasing alpha-glucose.. Functionally, beta-glucanases participate in the metabolism of beta-glucan, the main structural component of the cell wall. It could also function biosynthetically as a transglycosylase. The sequence is that of Glucan 1,3-beta-glucosidase from Blumeria graminis (Powdery mildew).